A 68-amino-acid chain; its full sequence is Beta-defensin 1 (68 aa).

The first 21 residues, 1–21, serve as a signal peptide directing secretion; that stretch reads MRTSYLLLFTLCLLLSEMASG. Positions 22–32 are excised as a propeptide; the sequence is GNFLTGLGHRS. Intrachain disulfides connect cysteine 37–cysteine 66, cysteine 44–cysteine 59, and cysteine 49–cysteine 67.

It belongs to the beta-defensin family. In terms of assembly, monomer. Homodimer.

It is found in the secreted. The protein resides in the membrane. Its function is as follows. Has bactericidal activity. May act as a ligand for C-C chemokine receptor CCR6. Positively regulates the sperm motility and bactericidal activity in a CCR6-dependent manner. Binds to CCR6 and triggers Ca2+ mobilization in the sperm which is important for its motility. In Pongo pygmaeus (Bornean orangutan), this protein is Beta-defensin 1 (DEFB1).